The sequence spans 1175 residues: 1-phosphatidylinositol 4,5-bisphosphate phosphodiesterase beta-4 (1175 aa).

At Ala2 the chain carries N-acetylalanine. Residues 313–463 (QEMDHPLAHY…LKRKILIKNK (151 aa)) form the PI-PLC X-box domain. Catalysis depends on residues His328 and His375. A disordered region spans residues 487-512 (AAPASILEDDNEEEIESADQEEEAHP). Acidic residues predominate over residues 493-508 (LEDDNEEEIESADQEE). Residues 565–681 (LSTMINYAQP…GYLLKPDFMR (117 aa)) form the PI-PLC Y-box domain. In terms of domain architecture, C2 spans 684–809 (DRTFDPFSET…SLRNEGNKPL (126 aa)). Disordered stretches follow at residues 860–904 (SDIA…LGSG) and 1082–1110 (KISMENSKAISQDKSIKNKAERERRVREL). Polar residues-rich tracts occupy residues 885-900 (VTPQSSSELRPTTTAA) and 1085-1094 (MENSKAISQD). Residue Thr886 is modified to Phosphothreonine. Basic and acidic residues predominate over residues 1095 to 1109 (KSIKNKAERERRVRE).

It depends on Ca(2+) as a cofactor. In terms of tissue distribution, preferentially expressed in the retina.

It is found in the cell membrane. The catalysed reaction is a 1,2-diacyl-sn-glycero-3-phospho-(1D-myo-inositol-4,5-bisphosphate) + H2O = 1D-myo-inositol 1,4,5-trisphosphate + a 1,2-diacyl-sn-glycerol + H(+). It carries out the reaction a 1,2-diacyl-sn-glycero-3-phospho-(1D-myo-inositol) + H2O = 1D-myo-inositol 1-phosphate + a 1,2-diacyl-sn-glycerol + H(+). Functionally, activated phosphatidylinositol-specific phospholipase C enzymes catalyze the production of the second messenger molecules diacylglycerol (DAG) and inositol 1,4,5-trisphosphate (IP3) involved in G-protein coupled receptor signaling pathways. PLCB4 is a direct effector of the endothelin receptor signaling pathway that plays an essential role in lower jaw and middle ear structures development. This chain is 1-phosphatidylinositol 4,5-bisphosphate phosphodiesterase beta-4, found in Rattus norvegicus (Rat).